Reading from the N-terminus, the 53-residue chain is uncharacterized protein (53 aa).

The span at 1 to 10 (MHILTRSSKN) shows a compositional bias: polar residues. A disordered region spans residues 1–25 (MHILTRSSKNAFPRSRSRQDIHISS).

This is an uncharacterized protein from Saccharomyces cerevisiae (strain ATCC 204508 / S288c) (Baker's yeast).